The chain runs to 190 residues: MQSVVFVTGNANKLREVQDIVGNALPMLTCHQLDLPELQGTTQTVSIHKAKTAAAILKTPVLIEDTSLGFVALNGLPGPYIKWFMESVGHVGLNAMLHGFDDKSAFALCTFAYCEPGHDPILFEGRTDGLIVHPRGPAGFGWDPIFQPCGFTTTYAEMDKDLKNSISHRYKALALVKEFFQSKSDLALHS.

An ITP-binding site is contributed by 8 to 13; sequence TGNANK. Mg(2+) is bound at residue E37. ITP-binding positions include K49, 65–66, K82, 140–143, K163, and 168–169; these read DT, FGWD, and HR.

It belongs to the HAM1 NTPase family. In terms of assembly, homodimer. The cofactor is Mg(2+). Mn(2+) serves as cofactor.

Its subcellular location is the cytoplasm. The protein localises to the nucleus. It carries out the reaction ITP + H2O = IMP + diphosphate + H(+). It catalyses the reaction dITP + H2O = dIMP + diphosphate + H(+). The enzyme catalyses XTP + H2O = XMP + diphosphate + H(+). Functionally, pyrophosphatase that hydrolyzes non-canonical purine nucleotides such as inosine triphosphate (ITP), deoxyinosine triphosphate (dITP) or xanthosine 5'-triphosphate (XTP) to their respective monophosphate derivatives. The enzyme does not distinguish between the deoxy- and ribose forms. Probably excludes non-canonical purines from RNA and DNA precursor pools, thus preventing their incorporation into RNA and DNA and avoiding chromosomal lesions. The chain is Inosine triphosphate pyrophosphatase from Batrachochytrium dendrobatidis (strain JAM81 / FGSC 10211) (Frog chytrid fungus).